The primary structure comprises 319 residues: Olfactory receptor 2S2 (319 aa).

Topologically, residues 1 to 26 (MEKANETSPVMGFVLLRLSAHPELEK) are extracellular. N-linked (GlcNAc...) asparagine glycosylation is present at Asn5. A helical transmembrane segment spans residues 27–50 (TFFVLILLMYLVILLGNGVLILVT). Residues 51–58 (ILDSRLHT) lie on the Cytoplasmic side of the membrane. A helical membrane pass occupies residues 59–80 (PMYFFLGNLSFLDICFTTSSVP). Residues 81–101 (LVLDSFLTPQETISFSACAVQ) lie on the Extracellular side of the membrane. Cys98 and Cys190 are oxidised to a cystine. The helical transmembrane segment at 102-121 (MALSFAMAGTECLLLSMMAF) threads the bilayer. Residues 122-140 (DRYVAICNPLRYSVIMSKA) are Cytoplasmic-facing. A helical transmembrane segment spans residues 141–159 (AYMPMAASSWAIGGAASVV). The Extracellular segment spans residues 160-196 (HTSLAIQLPFCGDNVINHFTCEILAVLKLACADISIN). A helical membrane pass occupies residues 197–220 (VISMEVTNVIFLGVPVLFISFSYV). Residues 221–237 (FIITTILRIPSAEGRKK) lie on the Cytoplasmic side of the membrane. A helical transmembrane segment spans residues 238 to 260 (VFSTCSAHLTVVIVFYGTLFFMY). The Extracellular segment spans residues 261-279 (GKPKSKDSMGADKEDLSDK). A helical transmembrane segment spans residues 280–299 (LIPLFYGVVTPMLNPIIYSL). Residues 300–319 (RNKDVKAAVRRLLRPKGFTQ) are Cytoplasmic-facing.

Belongs to the G-protein coupled receptor 1 family.

It is found in the cell membrane. Functionally, odorant receptor. The polypeptide is Olfactory receptor 2S2 (OR2S2) (Homo sapiens (Human)).